Here is a 426-residue protein sequence, read N- to C-terminus: Serine hydroxymethyltransferase (426 aa).

Residues Leu121 and 125-127 (GHL) each bind (6S)-5,6,7,8-tetrahydrofolate. The residue at position 230 (Lys230) is an N6-(pyridoxal phosphate)lysine. 354–356 (SPF) serves as a coordination point for (6S)-5,6,7,8-tetrahydrofolate.

It belongs to the SHMT family. In terms of assembly, homodimer. The cofactor is pyridoxal 5'-phosphate.

It is found in the cytoplasm. The catalysed reaction is (6R)-5,10-methylene-5,6,7,8-tetrahydrofolate + glycine + H2O = (6S)-5,6,7,8-tetrahydrofolate + L-serine. The protein operates within one-carbon metabolism; tetrahydrofolate interconversion. It participates in amino-acid biosynthesis; glycine biosynthesis; glycine from L-serine: step 1/1. Its function is as follows. Catalyzes the reversible interconversion of serine and glycine with tetrahydrofolate (THF) serving as the one-carbon carrier. This reaction serves as the major source of one-carbon groups required for the biosynthesis of purines, thymidylate, methionine, and other important biomolecules. Also exhibits THF-independent aldolase activity toward beta-hydroxyamino acids, producing glycine and aldehydes, via a retro-aldol mechanism. The chain is Serine hydroxymethyltransferase from Acaryochloris marina (strain MBIC 11017).